Consider the following 270-residue polypeptide: 2-dehydro-3-deoxyphosphooctonate aldolase (270 aa).

It belongs to the KdsA family.

The protein localises to the cytoplasm. The catalysed reaction is D-arabinose 5-phosphate + phosphoenolpyruvate + H2O = 3-deoxy-alpha-D-manno-2-octulosonate-8-phosphate + phosphate. The protein operates within carbohydrate biosynthesis; 3-deoxy-D-manno-octulosonate biosynthesis; 3-deoxy-D-manno-octulosonate from D-ribulose 5-phosphate: step 2/3. It participates in bacterial outer membrane biogenesis; lipopolysaccharide biosynthesis. This chain is 2-dehydro-3-deoxyphosphooctonate aldolase, found in Helicobacter hepaticus (strain ATCC 51449 / 3B1).